A 92-amino-acid polypeptide reads, in one-letter code: DNA-directed RNA polymerase subunit Rpo11 (92 aa).

Belongs to the archaeal Rpo11/eukaryotic RPB11/RPC19 RNA polymerase subunit family. As to quaternary structure, part of the RNA polymerase complex.

It is found in the cytoplasm. It catalyses the reaction RNA(n) + a ribonucleoside 5'-triphosphate = RNA(n+1) + diphosphate. DNA-dependent RNA polymerase (RNAP) catalyzes the transcription of DNA into RNA using the four ribonucleoside triphosphates as substrates. In Methanosarcina barkeri (strain Fusaro / DSM 804), this protein is DNA-directed RNA polymerase subunit Rpo11.